We begin with the raw amino-acid sequence, 976 residues long: MPLSTGLTLSSLNVMEKADNHYNMMTKQPPALSPVDMVSSRRGFNPIAFTPWPVTILSSLVYLAFIIPIIVVHHLVPPAPKESPEGVDLKEAWHDLQHLTRQYHPYNSHSNDEVHQWLLKRIHAISASSSARSGDTTGPDIFIFDDNQTNLTFSSVGVAAKSITGVYFESKNILVYIRGAEDDQEEWWESPDGEPSGKGGVLVNAHYDSVSTGYGATDNGVGVISTLQLLKYFTTPGHYPRKGLVLLFNDGEEDFLNGAYAFSQHPLSKFTHTFLNIEGAGAGGRAVLFRSTDTEVTRFYGNTEHPFGTVLARDAFQLGFIRSETDYHVFDGVFGMRGLDVAFMEPRSRYHTDQDDARHTSIDSVWHMLSAAIKTTEGLVSYTGDAFDGDNGNDGKLNNGAGTLGVWFDFYGSSFAVFELNTLFGHSVALLVVAPLLLIATCVTLYTLDKMYMFSMYTYLSESGGQVSLYGLRGLFRFPLILGISTALTIGLAFLLMKANPFIIYSSPYAVWNPSALHRAYAFTWMFGMMWVLLVIATVYQKQHGIASSYFIVFYFAGVSIATWISYLELFGLPTTQDYARRQIRITDRTPSSDSRLLAPSADELPPSGSAAGHDFNPEDVEDEEPTESTSLLRGQQRTTFANYASARSNSDGNISTNASLHPKDHRLEQRWSINLISSAWILQFLFVAPIVIILLGQLGLFLTSATYQIGADGGSQLVIYVGIAVLSVLILLPLFPFIHRFTYHIPTFLLFVLIGTLVYNLTAFPFSHSNRLKVAFVQEIDLETGKNQASLVGVEPYIHDIVRTIPSTTGKEVSCISRGYGGRAKCSWDGLKPRVVDAPYKEWITYNISQAKDDKHTRFEISGKNTRACKILFDSPIADFKVLGSVTDERIPHTGPKGVSEIRLWSRTWENTWTVDVEWTKKNANRQGKVMCIWSDDNDLKVIPALDEIRNFAPAWAAITKLRDGLVEGSHSFKL.

Over 1–51 (MPLSTGLTLSSLNVMEKADNHYNMMTKQPPALSPVDMVSSRRGFNPIAFTP) the chain is Cytoplasmic. The chain crosses the membrane as a helical span at residues 52–72 (WPVTILSSLVYLAFIIPIIVV). Over 73–399 (HHLVPPAPKE…DNGNDGKLNN (327 aa)) the chain is Vacuolar. N-linked (GlcNAc...) asparagine glycans are attached at residues asparagine 147 and asparagine 150. Zn(2+) contacts are provided by histidine 206 and aspartate 218. The active-site Proton acceptor is glutamate 252. Residues glutamate 253, glutamate 278, and histidine 351 each contribute to the Zn(2+) site. A helical transmembrane segment spans residues 400–420 (GAGTLGVWFDFYGSSFAVFEL). The Cytoplasmic portion of the chain corresponds to 421–427 (NTLFGHS). A helical membrane pass occupies residues 428 to 448 (VALLVVAPLLLIATCVTLYTL). The Vacuolar segment spans residues 449–477 (DKMYMFSMYTYLSESGGQVSLYGLRGLFR). The helical transmembrane segment at 478–498 (FPLILGISTALTIGLAFLLMK) threads the bilayer. Topologically, residues 499–519 (ANPFIIYSSPYAVWNPSALHR) are cytoplasmic. The helical transmembrane segment at 520-540 (AYAFTWMFGMMWVLLVIATVY) threads the bilayer. Topologically, residues 541–550 (QKQHGIASSY) are vacuolar. The chain crosses the membrane as a helical span at residues 551-571 (FIVFYFAGVSIATWISYLELF). Residues 572–675 (GLPTTQDYAR…HRLEQRWSIN (104 aa)) are Cytoplasmic-facing. The segment at 590–633 (TPSSDSRLLAPSADELPPSGSAAGHDFNPEDVEDEEPTESTSLL) is disordered. A compositionally biased stretch (acidic residues) spans 618-627 (PEDVEDEEPT). Residues 676 to 696 (LISSAWILQFLFVAPIVIILL) form a helical membrane-spanning segment. Residues 697–718 (GQLGLFLTSATYQIGADGGSQL) lie on the Vacuolar side of the membrane. A helical membrane pass occupies residues 719 to 739 (VIYVGIAVLSVLILLPLFPFI). Residues 740 to 745 (HRFTYH) lie on the Cytoplasmic side of the membrane. The helical transmembrane segment at 746-766 (IPTFLLFVLIGTLVYNLTAFP) threads the bilayer. Over 767–976 (FSHSNRLKVA…LVEGSHSFKL (210 aa)) the chain is Vacuolar. The N-linked (GlcNAc...) asparagine glycan is linked to asparagine 848.

The protein belongs to the peptidase M28 family. Zn(2+) is required as a cofactor.

The protein localises to the vacuole membrane. In terms of biological role, may be involved in vacuolar sorting and osmoregulation. This is Vacuolar membrane protease from Arthroderma otae (strain ATCC MYA-4605 / CBS 113480) (Microsporum canis).